The primary structure comprises 274 residues: NADH-ubiquinone oxidoreductase chain 2 (274 aa).

8 helical membrane passes run 28–48, 54–74, 79–99, 107–127, 128–148, 171–191, 206–226, and 254–274; these read MIIM…FWFP, LTWM…LMLI, IKYL…IGGL, LMAF…MFSE, SIWL…TFMF, FTLF…GFLP, FLLT…LRIC, and LIMT…YFMF.

The protein belongs to the complex I subunit 2 family.

It is found in the mitochondrion inner membrane. The enzyme catalyses a ubiquinone + NADH + 5 H(+)(in) = a ubiquinol + NAD(+) + 4 H(+)(out). Core subunit of the mitochondrial membrane respiratory chain NADH dehydrogenase (Complex I) that is believed to belong to the minimal assembly required for catalysis. Complex I functions in the transfer of electrons from NADH to the respiratory chain. The immediate electron acceptor for the enzyme is believed to be ubiquinone. The protein is NADH-ubiquinone oxidoreductase chain 2 (mt:ND2) of Drosophila sechellia (Fruit fly).